A 536-amino-acid polypeptide reads, in one-letter code: SNW domain-containing protein 1 (536 aa).

Positions 1–46 (MALTSFLPAPTQLSQDQLEAEEKARSQRSRQTSLVSSRREPPPYGY) are disordered. Position 2 is an N-acetylalanine (Ala2). A Phosphoserine modification is found at Ser14. Lys23 participates in a covalent cross-link: Glycyl lysine isopeptide (Lys-Gly) (interchain with G-Cter in SUMO2). An interaction with PPIL1 region spans residues 59-79 (GDGGAFPEIHVAQYPLDMGRK). Residues Lys81, Lys97, Lys115, Lys122, Lys141, Lys158, and Lys170 each participate in a glycyl lysine isopeptide (Lys-Gly) (interchain with G-Cter in SUMO2) cross-link. The SNW stretch occupies residues 174-339 (AQYIRYTPSQ…KARERRAGIK (166 aa)). A phosphoserine mark is found at Ser182 and Ser190. Residue Lys193 forms a Glycyl lysine isopeptide (Lys-Gly) (interchain with G-Cter in SUMO2) linkage. The disordered stretch occupies residues 209-234 (PPRFKINKKIPRGPPSPPAPVMHSPS). Phosphoserine is present on residues Ser224, Ser232, and Ser234. Residues Lys240, Lys258, Lys286, Lys339, Lys344, Lys416, and Lys441 each participate in a glycyl lysine isopeptide (Lys-Gly) (interchain with G-Cter in SUMO2) cross-link. The disordered stretch occupies residues 311 to 386 (KMAQKEKEKH…RSKLQRNENR (76 aa)). Ser446 carries the post-translational modification Phosphoserine. Lys452 participates in a covalent cross-link: Glycyl lysine isopeptide (Lys-Gly) (interchain with G-Cter in SUMO2). Composition is skewed to basic and acidic residues over residues 469 to 489 (TNRF…RGRE) and 503 to 530 (KFLE…EHEG). Residues 469–536 (TNRFVPDKEF…EHEGKKRRKE (68 aa)) are disordered. Residues Ser479 and Ser481 each carry the phosphoserine modification. Residue Lys509 forms a Glycyl lysine isopeptide (Lys-Gly) (interchain with G-Cter in SUMO2) linkage.

It belongs to the SNW family. As to quaternary structure, identified in the spliceosome C complex. Associates with U4/U6-U5 tri-small nuclear ribonucleoproteins (U4/U6-U5 tri-snRNPs). Component of the minor spliceosome, which splices U12-type introns. Interacts with SKI, SMAD2,SMAD3, RBPJ, RB1, PABPN1, MAGEA1, SIRT1, FOXN3, U2AF2, PPIL1, DAXX and ATP1B4. Interacts with VDR and RXRA; preferentially associates with VDR:RXRA heterodimers. Interacts with NCOR2. Interacts with MAML1. Interacts with NOTCH1 NICD; the interaction involves multimerized NOTCH1 NICD. Forms a complex with NOTCH1 NICD and MAML1; the association is dissociated by RBPJ. Associates with positive transcription elongation factor b (P-TEFb). Component of the SNARP complex which consists at least of SNIP1, SNW1, THRAP3, BCLAF1 and PNN.

The protein resides in the nucleus. Involved in pre-mRNA splicing as component of the spliceosome. As a component of the minor spliceosome, involved in the splicing of U12-type introns in pre-mRNAs. Required in the specific splicing of CDKN1A pre-mRNA; the function probably involves the recruitment of U2AF2 to the mRNA. May recruit PPIL1 to the spliceosome. May be involved in cyclin-D1/CCND1 mRNA stability through the SNARP complex which associates with both the 3'end of the CCND1 gene and its mRNA. Involved in transcriptional regulation. Modulates TGF-beta-mediated transcription via association with SMAD proteins, MYOD1-mediated transcription via association with PABPN1, RB1-mediated transcriptional repression, and retinoid-X receptor (RXR)- and vitamin D receptor (VDR)-dependent gene transcription in a cell line-specific manner probably involving coactivators NCOA1 and GRIP1. Is involved in NOTCH1-mediated transcriptional activation. Binds to multimerized forms of Notch intracellular domain (NICD) and is proposed to recruit transcriptional coactivators such as MAML1 to form an intermediate preactivation complex which associates with DNA-bound CBF-1/RBPJ to form a transcriptional activation complex by releasing SNW1 and redundant NOTCH1 NICD. The protein is SNW domain-containing protein 1 (SNW1) of Pongo abelii (Sumatran orangutan).